A 97-amino-acid polypeptide reads, in one-letter code: Acylphosphatase-2 (97 aa).

Position 2 is an N-acetylalanine (A2). An Acylphosphatase-like domain is found at 7 to 97 (SVDYEVFGTV…LEYSNFSIRY (91 aa)). Residues R22 and N40 contribute to the active site. Residue S91 is modified to Phosphoserine.

This sequence belongs to the acylphosphatase family.

It carries out the reaction an acyl phosphate + H2O = a carboxylate + phosphate + H(+). Its function is as follows. Its physiological role is not yet clear. The protein is Acylphosphatase-2 (Acyp2) of Rattus norvegicus (Rat).